The chain runs to 546 residues: MPPPHVRAWYSYAFAAEVFSSYPSGNIPANHFGTCDGKALQSSDPRGMDRYSFVQSSSMYVKSIAVACQAICIISIGPLADIAYWRKRLLLTFAYSGSLSGILFLLFPPLPYAWTPIMAAILNIVGNATYSTSIVCSNAFLPGLAKEDVDVQKAWEEATSEGLQDGLRDVHEDTDEENTGSVSREDEATHLLPDRLIPAVCAISTQDLALSDPLAKLIEPSNAKKHYESRLSLTTSRLSSTGTAIGFFSGVSVLTLLLIPVTALGGSTFSMRLAIGLSGVWWALFTVPTCIGLPGGAPGHGSDFSASQVKKAWVKIGKMVAPKQIHQLPNLYIFLLAWIFLSDGFHTTTYAAILYASSVLSMSAPKIILVGILVQLAAVVSSVLVPRVQRRLSTTSSKPVTNYKVLLAGVVAAAFIPVYTCAGLVLPFGGLRSEGEMYVLAVWFGLVFGPFLSYSRAVYAELIPPGHESTFFSLFAFTDKSASFIGPAAVGLISDLTGNIRYGFLFLLVMLVVPIPVLGRVAVERGRREAVEWAERSRKEMSDERV.

Helical transmembrane passes span 64-84 (IAVA…DIAY), 102-122 (ILFL…AAIL), and 124-144 (IVGN…LPGL). The disordered stretch occupies residues 160-185 (SEGLQDGLRDVHEDTDEENTGSVSRE). Helical transmembrane passes span 244–264 (AIGF…VTAL), 273–293 (LAIG…CIGL), 333–353 (IFLL…YAAI), 365–385 (PKII…SVLV), 405–425 (VLLA…AGLV), 435–455 (GEMY…LSYS), 473–493 (SLFA…VGLI), and 503–523 (GFLF…RVAV).

Belongs to the ATG22 family.

It localises to the vacuole membrane. Functionally, vacuolar effluxer which mediate the efflux of amino acids resulting from autophagic degradation. The release of autophagic amino acids allows the maintenance of protein synthesis and viability during nitrogen starvation. This Cryptococcus neoformans var. neoformans serotype D (strain B-3501A) (Filobasidiella neoformans) protein is Autophagy-related protein 22 (ATG22).